A 380-amino-acid polypeptide reads, in one-letter code: Succinate--CoA ligase [ADP-forming] subunit beta (380 aa).

The region spanning 9-236 (KGVFADAGIP…EAAGDELEAK (228 aa)) is the ATP-grasp domain. ATP is bound by residues Lys45, 52–54 (GRG), Glu91, Val94, and Glu99. Residues Asn191 and Asp205 each contribute to the Mg(2+) site. Residues Asn256 and 313 to 315 (GIT) each bind substrate.

Belongs to the succinate/malate CoA ligase beta subunit family. In terms of assembly, heterotetramer of two alpha and two beta subunits. The cofactor is Mg(2+).

It carries out the reaction succinate + ATP + CoA = succinyl-CoA + ADP + phosphate. The catalysed reaction is GTP + succinate + CoA = succinyl-CoA + GDP + phosphate. Its pathway is carbohydrate metabolism; tricarboxylic acid cycle; succinate from succinyl-CoA (ligase route): step 1/1. Functionally, succinyl-CoA synthetase functions in the citric acid cycle (TCA), coupling the hydrolysis of succinyl-CoA to the synthesis of either ATP or GTP and thus represents the only step of substrate-level phosphorylation in the TCA. The beta subunit provides nucleotide specificity of the enzyme and binds the substrate succinate, while the binding sites for coenzyme A and phosphate are found in the alpha subunit. This is Succinate--CoA ligase [ADP-forming] subunit beta from Natronomonas pharaonis (strain ATCC 35678 / DSM 2160 / CIP 103997 / JCM 8858 / NBRC 14720 / NCIMB 2260 / Gabara) (Halobacterium pharaonis).